The chain runs to 213 residues: High frequency lysogenization protein HflD (213 aa).

A coiled-coil region spans residues 99–126; it reads LSSAKGALDTLGNRINGLQRQLEHFDLQ.

Belongs to the HflD family. Interacts with CII protein from phage lambda.

The protein resides in the cytoplasm. It is found in the cell inner membrane. Functionally, negative regulator of phage lambda lysogenization. Contributes to the degradation of the phage regulatory protein CII. Acts probably by holding CII on the membrane surface, away from the target promoters, but close to the FtsH protease. This Escherichia coli O157:H7 protein is High frequency lysogenization protein HflD.